The chain runs to 4518 residues: Dynein axonemal heavy chain 11 (4518 aa).

Positions 1-1857 (MAASVAAQEA…LVHICDAQFQ (1857 aa)) are stem. 4 AAA regions span residues 1858–2079 (YFYE…VLVV), 2139–2368 (QMVR…TSFK), 2474–2721 (TMDP…VFQG), and 2819–3068 (NYND…EGRH). ATP-binding positions include 1896–1903 (GPAGTGKT), 2177–2184 (GNAGTGKS), 2512–2519 (GNAGVGKT), and 2857–2864 (GVGGSGKQ). Residues 3074-3405 (KSFLEQISLF…GQSIKSFEAQ (332 aa)) are stalk. The stretch at 3322 to 3391 (LAQANLELAT…NRLVKELEVK (70 aa)) forms a coiled coil. AAA regions lie at residues 3461 to 3688 (LTDD…EIER) and 3898 to 4124 (LRNF…VLYN).

The protein belongs to the dynein heavy chain family. As to quaternary structure, consists of at least two heavy chains and a number of intermediate and light chains. Interacts with CFAP45.

It localises to the cytoplasm. The protein resides in the cytoskeleton. The protein localises to the cilium axoneme. Force generating protein of respiratory cilia. Produces force towards the minus ends of microtubules. Dynein has ATPase activity; the force-producing power stroke is thought to occur on release of ADP. The polypeptide is Dynein axonemal heavy chain 11 (DNAH11) (Sus scrofa (Pig)).